A 438-amino-acid chain; its full sequence is Adenylosuccinate synthetase (438 aa).

GTP-binding positions include 13-19 (GDEGKGK) and 41-43 (GHT). Asp-14 functions as the Proton acceptor in the catalytic mechanism. Positions 14 and 41 each coordinate Mg(2+). IMP is bound by residues 14-17 (DEGK), 39-42 (NAGH), Thr-136, Arg-150, Gln-231, Thr-246, and Arg-310. The Proton donor role is filled by His-42. Residue 306-312 (STTGRRR) participates in substrate binding. GTP is bound by residues Arg-312, 338–340 (KID), and 421–423 (STG).

It belongs to the adenylosuccinate synthetase family. Homodimer. It depends on Mg(2+) as a cofactor.

It localises to the cytoplasm. It carries out the reaction IMP + L-aspartate + GTP = N(6)-(1,2-dicarboxyethyl)-AMP + GDP + phosphate + 2 H(+). Its pathway is purine metabolism; AMP biosynthesis via de novo pathway; AMP from IMP: step 1/2. In terms of biological role, plays an important role in the de novo pathway of purine nucleotide biosynthesis. Catalyzes the first committed step in the biosynthesis of AMP from IMP. The protein is Adenylosuccinate synthetase of Blochmanniella floridana.